Here is a 178-residue protein sequence, read N- to C-terminus: MSIEVSNESGIDVSESELVSVARFVIRKMDVNPAAELSMVLLDTAAMADLHMRWMDLPGPTDVMSFPMDELEPGGRPDTPEPGPSMLGDIVLCPEFAAKQAADAGHTLGQELALLTVHGVLHLLGYDHAEPDEEKEMFALQRELLEEWVAEQVEAYHLDRQNEKDRRLLDKSRYFDTP.

Zn(2+)-binding residues include His118, His122, and His128.

This sequence belongs to the endoribonuclease YbeY family. The cofactor is Zn(2+).

The protein localises to the cytoplasm. Its function is as follows. Single strand-specific metallo-endoribonuclease involved in late-stage 70S ribosome quality control and in maturation of the 3' terminus of the 16S rRNA. The chain is Endoribonuclease YbeY from Mycolicibacterium gilvum (strain PYR-GCK) (Mycobacterium gilvum (strain PYR-GCK)).